A 414-amino-acid chain; its full sequence is Histidine--tRNA ligase (414 aa).

It belongs to the class-II aminoacyl-tRNA synthetase family. In terms of assembly, homodimer.

It is found in the cytoplasm. It catalyses the reaction tRNA(His) + L-histidine + ATP = L-histidyl-tRNA(His) + AMP + diphosphate + H(+). The chain is Histidine--tRNA ligase from Ehrlichia ruminantium (strain Welgevonden).